The chain runs to 524 residues: N-acetylgalactosamine-6-sulfatase (524 aa).

Positions 1 to 27 are cleaved as a signal peptide; it reads MTACSTAIRAQQLLLPVLSALGLLAAG. Residues 28-381 form a catalytic domain region; sequence APQPPNIVLL…PTMLQGHIID (354 aa). Ca(2+) contacts are provided by Asp40, Asp41, and Cys80. The active-site Nucleophile is the Cys80. Cys80 bears the 3-oxoalanine (Cys) mark. His143 is an active-site residue. The N-linked (GlcNAc...) asparagine glycan is linked to Asn205. Ca(2+) contacts are provided by Asp290 and Asn291. An intrachain disulfide couples Cys310 to Cys421. An N-linked (GlcNAc...) asparagine glycan is attached at Asn425. Intrachain disulfides connect Cys491–Cys520 and Cys503–Cys509.

It belongs to the sulfatase family. As to quaternary structure, homodimer. Requires Ca(2+) as cofactor. Post-translationally, the conversion to 3-oxoalanine (also known as C-formylglycine, FGly), of a serine or cysteine residue in prokaryotes and of a cysteine residue in eukaryotes, is critical for catalytic activity.

Its subcellular location is the lysosome. It carries out the reaction Hydrolysis of the 6-sulfate groups of the N-acetyl-D-galactosamine 6-sulfate units of chondroitin sulfate and of the D-galactose 6-sulfate units of keratan sulfate.. The polypeptide is N-acetylgalactosamine-6-sulfatase (Galns) (Rattus norvegicus (Rat)).